A 163-amino-acid chain; its full sequence is Phosphopantetheine adenylyltransferase (163 aa).

ATP is bound by residues Ser-10 and His-18. Ser-10 provides a ligand contact to substrate. Lys-42, Thr-75, and Arg-89 together coordinate substrate. ATP contacts are provided by residues Gly-90–Arg-92, Glu-100, and Tyr-125–Ser-131.

The protein belongs to the bacterial CoaD family. As to quaternary structure, homohexamer. Mg(2+) serves as cofactor.

The protein localises to the cytoplasm. It catalyses the reaction (R)-4'-phosphopantetheine + ATP + H(+) = 3'-dephospho-CoA + diphosphate. Its pathway is cofactor biosynthesis; coenzyme A biosynthesis; CoA from (R)-pantothenate: step 4/5. Functionally, reversibly transfers an adenylyl group from ATP to 4'-phosphopantetheine, yielding dephospho-CoA (dPCoA) and pyrophosphate. In Enterococcus faecalis (strain ATCC 700802 / V583), this protein is Phosphopantetheine adenylyltransferase.